Reading from the N-terminus, the 154-residue chain is Spermatogenesis-associated protein 19, mitochondrial (154 aa).

A mitochondrion-targeting transit peptide spans 1-24 (MIITTWIVYILARKGAGLPFPPKV). Phosphoserine occurs at positions 26 and 116.

The protein localises to the mitochondrion outer membrane. It localises to the mitochondrion. The protein resides in the cell projection. It is found in the cilium. Its subcellular location is the flagellum. Its function is as follows. Essential for sperm motility and male fertility. Plays an important role in sperm motility by regulating the organization and function of the mitochondria and is also required for correct sperm midpiece assembly. The chain is Spermatogenesis-associated protein 19, mitochondrial (SPATA19) from Bos taurus (Bovine).